Here is a 567-residue protein sequence, read N- to C-terminus: SRSF protein kinase 3 (567 aa).

The segment covering 1 to 16 (MSASTGGGGDSGGSGG) has biased composition (gly residues). The disordered stretch occupies residues 1 to 36 (MSASTGGGGDSGGSGGSSSSSQASCGPESSGSELAL). The span at 17–32 (SSSSSQASCGPESSGS) shows a compositional bias: low complexity. S50 carries the phosphoserine modification. The region spanning 79 to 565 (YHVVRKLGWG…AADCLQHPWL (487 aa)) is the Protein kinase domain. ATP is bound by residues 85-93 (LGWGHFSTV) and K108. D212 serves as the catalytic Proton acceptor. Disordered stretches follow at residues 238 to 283 (QQAG…RLLE) and 298 to 351 (ATQA…SQTS). The span at 248-258 (SIVSTAPQEVL) shows a compositional bias: polar residues. The segment covering 264 to 279 (SKNKRKKMRRKRKQQK) has biased composition (basic residues). The segment covering 327–348 (AGPSPASSSPAPGGGRSLSAGS) has biased composition (low complexity). Position 330 is a phosphoserine (S330).

Belongs to the protein kinase superfamily. CMGC Ser/Thr protein kinase family. In terms of tissue distribution, expressed in skeletal and heart muscle. Also expressed in the fetal brain.

It localises to the nucleus. It is found in the cytoplasm. It carries out the reaction L-seryl-[protein] + ATP = O-phospho-L-seryl-[protein] + ADP + H(+). It catalyses the reaction L-threonyl-[protein] + ATP = O-phospho-L-threonyl-[protein] + ADP + H(+). In terms of biological role, serine/arginine-rich protein-specific kinase which specifically phosphorylates its substrates at serine residues located in regions rich in arginine/serine dipeptides, known as RS domains. Phosphorylates the SR splicing factor SRSF1 and the lamin-B receptor (LBR) in vitro. Required for normal muscle development. The chain is SRSF protein kinase 3 (SRPK3) from Homo sapiens (Human).